The chain runs to 608 residues: Aspartate--tRNA(Asp/Asn) ligase (608 aa).

Glu-175 is an L-aspartate binding site. The segment at 199 to 202 is aspartate; it reads QLFK. Residue Arg-221 coordinates L-aspartate. ATP-binding positions include 221–223 and Gln-230; that span reads RDE. L-aspartate is bound at residue His-453. Glu-487 lines the ATP pocket. Position 494 (Arg-494) interacts with L-aspartate. 539–542 contributes to the ATP binding site; that stretch reads GWDR. The interval 566–608 is disordered; it reads IDPLTDAPAAITPQQRKEAGIDAKPKPKAEAQAEAQAEESAEK. Over residues 580 to 596 the composition is skewed to basic and acidic residues; it reads QRKEAGIDAKPKPKAEA.

It belongs to the class-II aminoacyl-tRNA synthetase family. Type 1 subfamily. In terms of assembly, homodimer.

It localises to the cytoplasm. It carries out the reaction tRNA(Asx) + L-aspartate + ATP = L-aspartyl-tRNA(Asx) + AMP + diphosphate. Its function is as follows. Aspartyl-tRNA synthetase with relaxed tRNA specificity since it is able to aspartylate not only its cognate tRNA(Asp) but also tRNA(Asn). Reaction proceeds in two steps: L-aspartate is first activated by ATP to form Asp-AMP and then transferred to the acceptor end of tRNA(Asp/Asn). This Corynebacterium glutamicum (strain ATCC 13032 / DSM 20300 / JCM 1318 / BCRC 11384 / CCUG 27702 / LMG 3730 / NBRC 12168 / NCIMB 10025 / NRRL B-2784 / 534) protein is Aspartate--tRNA(Asp/Asn) ligase.